The chain runs to 380 residues: Flap endonuclease 1 (380 aa).

Residues 1–105 (MGIKGLAQVL…GELAKRVARH (105 aa)) form an N-domain region. Aspartate 34 lines the Mg(2+) pocket. The DNA site is built by arginine 47 and arginine 71. The Mg(2+) site is built by aspartate 87, glutamate 159, glutamate 161, aspartate 180, and aspartate 182. The interval 123 to 254 (MVDRFAKRTV…ARAVELIRQY (132 aa)) is I-domain. Glutamate 159 lines the DNA pocket. DNA is bound by residues glycine 232 and aspartate 234. Residue aspartate 234 participates in Mg(2+) binding. Residues 337–345 (PQGRLDSFF) are interaction with PCNA. Residues 340–380 (RLDSFFKPVPSSPKKPVDTKSKGSAKRKRDSNKGGESKKKR) are disordered. Residues 342–353 (DSFFKPVPSSPK) show a composition bias toward low complexity. A phosphoserine mark is found at serine 350 and serine 351. Residues 370–380 (SNKGGESKKKR) are compositionally biased toward basic and acidic residues.

It belongs to the XPG/RAD2 endonuclease family. FEN1 subfamily. In terms of assembly, interacts with PCNA. Three molecules of rad2 bind to one PCNA trimer with each molecule binding to one PCNA monomer. PCNA stimulates the nuclease activity without altering cleavage specificity. Mg(2+) serves as cofactor. Post-translationally, phosphorylated. Phosphorylation upon DNA damage induces relocalization to the nuclear plasma.

The protein localises to the nucleus. It is found in the nucleolus. The protein resides in the nucleoplasm. Its subcellular location is the mitochondrion. Its function is as follows. Structure-specific nuclease with 5'-flap endonuclease and 5'-3' exonuclease activities involved in DNA replication and repair. During DNA replication, cleaves the 5'-overhanging flap structure that is generated by displacement synthesis when DNA polymerase encounters the 5'-end of a downstream Okazaki fragment. It enters the flap from the 5'-end and then tracks to cleave the flap base, leaving a nick for ligation. Also involved in the long patch base excision repair (LP-BER) pathway, by cleaving within the apurinic/apyrimidinic (AP) site-terminated flap. Acts as a genome stabilization factor that prevents flaps from equilibrating into structures that lead to duplications and deletions. Also possesses 5'-3' exonuclease activity on nicked or gapped double-stranded DNA, and exhibits RNase H activity. Also involved in replication and repair of rDNA and in repairing mitochondrial DNA. The sequence is that of Flap endonuclease 1 from Schizosaccharomyces pombe (strain 972 / ATCC 24843) (Fission yeast).